Consider the following 185-residue polypeptide: ATP synthase subunit b, chloroplastic (185 aa).

A helical membrane pass occupies residues 27-49 (LATNPINLSVVLGVLIFFGKGVL).

It belongs to the ATPase B chain family. F-type ATPases have 2 components, F(1) - the catalytic core - and F(0) - the membrane proton channel. F(1) has five subunits: alpha(3), beta(3), gamma(1), delta(1), epsilon(1). F(0) has four main subunits: a(1), b(1), b'(1) and c(10-14). The alpha and beta chains form an alternating ring which encloses part of the gamma chain. F(1) is attached to F(0) by a central stalk formed by the gamma and epsilon chains, while a peripheral stalk is formed by the delta, b and b' chains.

The protein resides in the plastid. Its subcellular location is the chloroplast thylakoid membrane. F(1)F(0) ATP synthase produces ATP from ADP in the presence of a proton or sodium gradient. F-type ATPases consist of two structural domains, F(1) containing the extramembraneous catalytic core and F(0) containing the membrane proton channel, linked together by a central stalk and a peripheral stalk. During catalysis, ATP synthesis in the catalytic domain of F(1) is coupled via a rotary mechanism of the central stalk subunits to proton translocation. Functionally, component of the F(0) channel, it forms part of the peripheral stalk, linking F(1) to F(0). This Vitis vinifera (Grape) protein is ATP synthase subunit b, chloroplastic.